We begin with the raw amino-acid sequence, 385 residues long: Protein-glutamate methylesterase/protein-glutamine glutaminase (385 aa).

A Response regulatory domain is found at 20–138 (RVMIVDDSVV…EASAADIFKH (119 aa)). 4-aspartylphosphate is present on Asp-71. Positions 189-383 (GVTAPRVLLI…PKLVRLFSGD (195 aa)) constitute a CheB-type methylesterase domain. Active-site residues include Ser-201, His-229, and Asp-325.

This sequence belongs to the CheB family. In terms of processing, phosphorylated by CheA. Phosphorylation of the N-terminal regulatory domain activates the methylesterase activity.

The protein resides in the cytoplasm. It catalyses the reaction [protein]-L-glutamate 5-O-methyl ester + H2O = L-glutamyl-[protein] + methanol + H(+). It carries out the reaction L-glutaminyl-[protein] + H2O = L-glutamyl-[protein] + NH4(+). Involved in chemotaxis. Part of a chemotaxis signal transduction system that modulates chemotaxis in response to various stimuli. Catalyzes the demethylation of specific methylglutamate residues introduced into the chemoreceptors (methyl-accepting chemotaxis proteins or MCP) by CheR. Also mediates the irreversible deamidation of specific glutamine residues to glutamic acid. The polypeptide is Protein-glutamate methylesterase/protein-glutamine glutaminase (Rhodopseudomonas palustris (strain BisB5)).